The sequence spans 359 residues: Pyruvate dehydrogenase E1 component subunit beta, mitochondrial (359 aa).

A mitochondrion-targeting transit peptide spans 1–30; it reads MAAVAGLVRGPLRQASGLLKRRFHRSAPAA. Tyr67 is modified (phosphotyrosine). Glu89 is a binding site for thiamine diphosphate. Positions 142, 190, 191, 193, and 195 each coordinate K(+). Lys354 carries the post-translational modification N6-acetyllysine.

Heterotetramer of two PDHA1 and two PDHB subunits. The heterotetramer interacts with DLAT, and is part of the multimeric pyruvate dehydrogenase complex that contains multiple copies of pyruvate dehydrogenase (E1), dihydrolipoamide acetyltransferase (DLAT, E2) and lipoamide dehydrogenase (DLD, E3). These subunits are bound to an inner core composed of about 48 DLAT and 12 PDHX molecules. Interacts with DLAT. Requires thiamine diphosphate as cofactor.

Its subcellular location is the mitochondrion matrix. The enzyme catalyses N(6)-[(R)-lipoyl]-L-lysyl-[protein] + pyruvate + H(+) = N(6)-[(R)-S(8)-acetyldihydrolipoyl]-L-lysyl-[protein] + CO2. Its function is as follows. The pyruvate dehydrogenase complex catalyzes the overall conversion of pyruvate to acetyl-CoA and CO(2), and thereby links the glycolytic pathway to the tricarboxylic cycle. The polypeptide is Pyruvate dehydrogenase E1 component subunit beta, mitochondrial (Pdhb) (Rattus norvegicus (Rat)).